The sequence spans 1059 residues: MDEVDDQYTPADVETAIETYWDDTNAYEATKEAHADDPSFFFVDGPPYTSGQMHLGTAWNKTLKDAIIRYKRMTGHHVTDRPGYDMHGLPIEVKVEEELGFETKRDIEEYGMESFIEECKRFAVDNRKAMDEDFQSIGVWMDWDNPYETLSPEYMEAAWWAFQQVDDRGLVERGKRSVSYCPRCQTAIAANEVEYDEITSPSIYVRFPLSNKEGSLVIWTTTPWTIPANTFVAVDKDLTYQAVRAEQGDDSEVLYIAESCVEDVLKQGRYDDYTVVEEYSGDELTGWEYDHPLADQVQTYADFAGAGEVYTAEYVEADRTGLVHSAPGHGQEDFARGQELDLETFVPVDGRGEFTEAAGQYTGTFVRDANDEIINDLDEEGVLLSSGTHEHRYGHCWRCDTDIIFLATDQWFITVTDIKDELLDNINDSEWYPQWARDNRFRDFVADAPDWNVSRQRYWGIPLPIWESVDDADTGDNSTSDDWIVIGTREELAERADQDVNPAEIDLHRPAVDPLTITENGSRYERVPDVFDVWIDSSVASWGTIDYPGETDAYDELWPADFIVEAHDQTRGWFWSQLGMGTAATGQVPYEEVMMHGFANDENGRKMSKSRGNIVTPEEAIDRAGRDPLRAYLLSHDQQGVDLSFEWDGLGEMQSTLNIFWNVFRFPLPYMDLDGYDPATADLSEGSMNIVDEWVLSRLQSVKATTRAAWEEYEIDTAVNTILEFITDDVSRFYIKAIRERMWADEDSASKRGAYATLSTVLDETIRLLAPIAPYLTEQMYQHLNGSETTVHALSYPSVDPEWQNETLESEMAVLRDVEEAAANARQQGGRKLRWPVPRVIVEAEDDSIADAVESLSGLLADRVNTEAIETVTQFDELIERAQPEMSVIGPEFGADAQRVMDAIEGGSREILTEGVTIDGVQYEITDEMITFDAEPPAYISAADFDGGTVYVDTSLTESIEAEGYARDVIRRIQQMRKELALDVDTEIQTAVDVADDRVADLVAQQRDVVATETRTNAFVDNIDRASENGQALIEEWDVEGVTVTIGVAPLKAQLSDQS.

Residues 47 to 57 carry the 'HIGH' region motif; that stretch reads PYTSGQMHLGT. A 'KMSKS' region motif is present at residues 606–610; sequence KMSKS. Lys609 contributes to the ATP binding site.

Belongs to the class-I aminoacyl-tRNA synthetase family. IleS type 2 subfamily. In terms of assembly, monomer. The cofactor is Zn(2+).

The protein localises to the cytoplasm. The catalysed reaction is tRNA(Ile) + L-isoleucine + ATP = L-isoleucyl-tRNA(Ile) + AMP + diphosphate. Catalyzes the attachment of isoleucine to tRNA(Ile). As IleRS can inadvertently accommodate and process structurally similar amino acids such as valine, to avoid such errors it has two additional distinct tRNA(Ile)-dependent editing activities. One activity is designated as 'pretransfer' editing and involves the hydrolysis of activated Val-AMP. The other activity is designated 'posttransfer' editing and involves deacylation of mischarged Val-tRNA(Ile). The chain is Isoleucine--tRNA ligase from Haloquadratum walsbyi (strain DSM 16790 / HBSQ001).